A 457-amino-acid polypeptide reads, in one-letter code: MDHLPIFCQLRDRDCLIVGGGDVAERKARLLLDAGARLTVNALAFIPQFTAWADAGMLTLVEGPFDESLLDTCWLAIAATDDDTLNQRVSEAAEARRIFCNVVDAPKAASFIMPSIIDRSPLMVAVSSGGTSPVLARLLREKLESLLPLHLGQVAKYAGQLRGRVKQQFATMSERRRFWEKLFVNDRLAQSLANNDQKAITETTEQLINEPLDHRGEVVLVGAGPGDAGLLTLKGLQQIQQADVVVYDRLVSDDIMNLVRRDADRVFVGKRAGYHCVPQEEINQILLREAQKGKRVVRLKGGDPFIFGRGGEELETLCNAGIPFSVVPGITAASGCSAYSGIPLTHRDYAQSVRLITGHLKTGGELDWENLAAEKQTLVFYMGLNQAATIQQKLIEHGMPGEMPVAIVENGTAVTQRVIDGTLTQLGELAQQMNSPSLIIIGRVVGLRDKLNWFSNH.

Positions 1–204 (MDHLPIFCQL…NDQKAITETT (204 aa)) are precorrin-2 dehydrogenase /sirohydrochlorin ferrochelatase. NAD(+) contacts are provided by residues 22–23 (DV) and 43–44 (LA). At Ser-128 the chain carries Phosphoserine. The segment at 216–457 (GEVVLVGAGP…RDKLNWFSNH (242 aa)) is uroporphyrinogen-III C-methyltransferase. S-adenosyl-L-methionine is bound at residue Pro-225. The Proton acceptor role is filled by Asp-248. Residue Lys-270 is the Proton donor of the active site. Residues 301 to 303 (GGD), Ile-306, 331 to 332 (TA), Met-382, and Gly-411 each bind S-adenosyl-L-methionine.

The protein in the N-terminal section; belongs to the precorrin-2 dehydrogenase / sirohydrochlorin ferrochelatase family. This sequence in the C-terminal section; belongs to the precorrin methyltransferase family.

The catalysed reaction is uroporphyrinogen III + 2 S-adenosyl-L-methionine = precorrin-2 + 2 S-adenosyl-L-homocysteine + H(+). It carries out the reaction precorrin-2 + NAD(+) = sirohydrochlorin + NADH + 2 H(+). It catalyses the reaction siroheme + 2 H(+) = sirohydrochlorin + Fe(2+). It functions in the pathway cofactor biosynthesis; adenosylcobalamin biosynthesis; precorrin-2 from uroporphyrinogen III: step 1/1. Its pathway is cofactor biosynthesis; adenosylcobalamin biosynthesis; sirohydrochlorin from precorrin-2: step 1/1. The protein operates within porphyrin-containing compound metabolism; siroheme biosynthesis; precorrin-2 from uroporphyrinogen III: step 1/1. It participates in porphyrin-containing compound metabolism; siroheme biosynthesis; siroheme from sirohydrochlorin: step 1/1. It functions in the pathway porphyrin-containing compound metabolism; siroheme biosynthesis; sirohydrochlorin from precorrin-2: step 1/1. Multifunctional enzyme that catalyzes the SAM-dependent methylations of uroporphyrinogen III at position C-2 and C-7 to form precorrin-2 via precorrin-1. Then it catalyzes the NAD-dependent ring dehydrogenation of precorrin-2 to yield sirohydrochlorin. Finally, it catalyzes the ferrochelation of sirohydrochlorin to yield siroheme. The protein is Siroheme synthase of Shigella flexneri.